The chain runs to 214 residues: Alpha-S1-casein (214 aa).

The first 15 residues, 1–15, serve as a signal peptide directing secretion; it reads MKLLILTCLVAVALA. A disordered region spans residues 59–91; that stretch reads IGSESTEDQAMEDAKQMKAGSSSSSEEIVPNSA. Residues serine 61, serine 63, serine 79, serine 80, serine 81, serine 82, serine 83, serine 90, and serine 130 each carry the phosphoserine modification.

It belongs to the alpha-casein family. Mammary gland specific. Secreted in milk.

It is found in the secreted. Its function is as follows. Important role in the capacity of milk to transport calcium phosphate. In Capra hircus (Goat), this protein is Alpha-S1-casein (CSN1S1).